The chain runs to 564 residues: Arginine--tRNA ligase (564 aa).

Residues 122–132 (PNIAKPFSIGH) carry the 'HIGH' region motif.

Belongs to the class-I aminoacyl-tRNA synthetase family. As to quaternary structure, monomer.

Its subcellular location is the cytoplasm. The catalysed reaction is tRNA(Arg) + L-arginine + ATP = L-arginyl-tRNA(Arg) + AMP + diphosphate. This chain is Arginine--tRNA ligase, found in Lactococcus lactis subsp. cremoris (strain SK11).